A 118-amino-acid chain; its full sequence is UPF0342 protein Hore_03100 (118 aa).

It belongs to the UPF0342 family.

This Halothermothrix orenii (strain H 168 / OCM 544 / DSM 9562) protein is UPF0342 protein Hore_03100.